A 204-amino-acid polypeptide reads, in one-letter code: Holliday junction branch migration complex subunit RuvA (204 aa).

Residues 1-64 (MIGKLKGTIE…EDQIRLFGFM (64 aa)) are domain I. The tract at residues 65 to 143 (AVLEREWFNL…AFAGEATNIG (79 aa)) is domain II. The flexible linker stretch occupies residues 144–151 (FKQELGEG). The segment at 152–204 (VAPAPVSDAVSALTNLGYSRDQAANAIAAAMKVAGDEADSAKLIRLGLKELSR) is domain III.

It belongs to the RuvA family. In terms of assembly, homotetramer. Forms an RuvA(8)-RuvB(12)-Holliday junction (HJ) complex. HJ DNA is sandwiched between 2 RuvA tetramers; dsDNA enters through RuvA and exits via RuvB. An RuvB hexamer assembles on each DNA strand where it exits the tetramer. Each RuvB hexamer is contacted by two RuvA subunits (via domain III) on 2 adjacent RuvB subunits; this complex drives branch migration. In the full resolvosome a probable DNA-RuvA(4)-RuvB(12)-RuvC(2) complex forms which resolves the HJ.

The protein resides in the cytoplasm. Functionally, the RuvA-RuvB-RuvC complex processes Holliday junction (HJ) DNA during genetic recombination and DNA repair, while the RuvA-RuvB complex plays an important role in the rescue of blocked DNA replication forks via replication fork reversal (RFR). RuvA specifically binds to HJ cruciform DNA, conferring on it an open structure. The RuvB hexamer acts as an ATP-dependent pump, pulling dsDNA into and through the RuvAB complex. HJ branch migration allows RuvC to scan DNA until it finds its consensus sequence, where it cleaves and resolves the cruciform DNA. The sequence is that of Holliday junction branch migration complex subunit RuvA from Rhizobium rhizogenes (strain K84 / ATCC BAA-868) (Agrobacterium radiobacter).